A 784-amino-acid polypeptide reads, in one-letter code: MTSVNLSRAPAAIIRRRLQLQPEFHAECSWLKSSSKHAPFTLSCQIRPKQLSQIAELRVTSLDASQASEKDISLVQTPHKVEVNEKIEESIEYVQNLLMTSGDGRISVSPYDTAVIALIKDLKGRDAPQFPSCLEWIAHHQLADGSWGDEFFCIYDRILNTLACVVALKSWNLQSDIIEKGVTYIKENVHKLKGANVEHRTAGFELVVPTFMQMATDLGIQGLPYDHPLIKEIADTKQQRLKEIPKDLVYQMPTNLLYSLEGLGDLEWERLLKLQSGNGSFLTSPSSTAAVLMHTKDEKCLKYIENALKNCDGGAPHTYPVDIFSRLWAIDRLQRLGISRFFQHEIKYFLDHIESVWEETGVFSGRYTKFSDIDDTSMGVRLLKMHGYDVDPNVLKHFKQQDGKFSCYIGQSVESASPMYNLYRAAQLRFPGEEVLEEATKFAFNFLQEMLVKDRLQERWVISDHLFDEIKLGLKMPWYATLPRVEAAYYLDHYAGSGDVWIGKSFYRMPEISNDTYKELAILDFNRCQTQHQLEWIQMQEWYDRCSLSEFGISKRELLRSYFLAAATIFEPERTQERLLWAKTRILSKMITSFVNISGTTLSLDYNFNGLDEIISANEDQGLAGTLLATFHQLLDGFDIYTLHQLKHVWSQWFMKVQQGEGSGGEDAVLLANTLNICAGLNEDVLSNNEYTALSTLTNKICNRLAQIQDNKILQVVDGSIKDKELEQDMQALVKLVLQENGGAVDRNIRHTFLSVSKTFYYDAYHDDETTDLHIFKVLFRPVV.

A substrate-binding site is contributed by Arg240. Mg(2+)-binding residues include Asp372 and Asp374. Positions 372-375 match the DXDD motif motif; that stretch reads DIDD. Arg459 contributes to the substrate binding site.

Belongs to the terpene synthase family.

Its subcellular location is the plastid. The protein localises to the chloroplast. It catalyses the reaction (2E,6E,10E)-geranylgeranyl diphosphate + H2O = 8-hydroxycopalyl diphosphate. It participates in secondary metabolite biosynthesis; terpenoid biosynthesis. In terms of biological role, involved in the biosynthesis of labdane-type diterpenoid including sclareol, a diterpene-diol that is used as fragrance and flavoring, and has anticancer effects (able to kill leukemic and colon cancer cells by apoptosis). Sclareol can also be used as synthesis precursor of ambergris substitution fragance products such as ambrox. Terpene synthase that produces 8-hydroxycopalyl diphosphate from geranylgeranyl diphosphate (GGPP). The protein is Copal-8-ol diphosphate hydratase TPSSA9, chloroplastic of Salvia sclarea (Clary sage).